Consider the following 399-residue polypeptide: uncharacterized protein (399 aa).

Belongs to the AdoMet synthetase 2 family.

This is an uncharacterized protein from Streptococcus pyogenes serotype M1.